A 465-amino-acid polypeptide reads, in one-letter code: ATP synthase subunit beta (465 aa).

Position 155–162 (155–162 (GGAGVGKT)) interacts with ATP.

It belongs to the ATPase alpha/beta chains family. In terms of assembly, F-type ATPases have 2 components, CF(1) - the catalytic core - and CF(0) - the membrane proton channel. CF(1) has five subunits: alpha(3), beta(3), gamma(1), delta(1), epsilon(1). CF(0) has three main subunits: a(1), b(2) and c(9-12). The alpha and beta chains form an alternating ring which encloses part of the gamma chain. CF(1) is attached to CF(0) by a central stalk formed by the gamma and epsilon chains, while a peripheral stalk is formed by the delta and b chains.

The protein resides in the cell membrane. The enzyme catalyses ATP + H2O + 4 H(+)(in) = ADP + phosphate + 5 H(+)(out). Its function is as follows. Produces ATP from ADP in the presence of a proton gradient across the membrane. The catalytic sites are hosted primarily by the beta subunits. The protein is ATP synthase subunit beta of Buchnera aphidicola subsp. Baizongia pistaciae (strain Bp).